The chain runs to 223 residues: Deoxyribose-phosphate aldolase (223 aa).

Asp89 (proton donor/acceptor) is an active-site residue. The active-site Schiff-base intermediate with acetaldehyde is Lys152. Lys181 acts as the Proton donor/acceptor in catalysis.

This sequence belongs to the DeoC/FbaB aldolase family. DeoC type 1 subfamily.

It is found in the cytoplasm. The catalysed reaction is 2-deoxy-D-ribose 5-phosphate = D-glyceraldehyde 3-phosphate + acetaldehyde. The protein operates within carbohydrate degradation; 2-deoxy-D-ribose 1-phosphate degradation; D-glyceraldehyde 3-phosphate and acetaldehyde from 2-deoxy-alpha-D-ribose 1-phosphate: step 2/2. Its function is as follows. Catalyzes a reversible aldol reaction between acetaldehyde and D-glyceraldehyde 3-phosphate to generate 2-deoxy-D-ribose 5-phosphate. This chain is Deoxyribose-phosphate aldolase, found in Bacillus cereus (strain ZK / E33L).